A 272-amino-acid chain; its full sequence is MTPTFAQAVTERTLSRRTRLCVGLDPRLGEYRDVAQLRQNTLDVLEASAPYAACVKPQLAFFEALGLPGFTLLEEVCAAARTLGLPVLLDGKRGDIGTTAAAYAQGWLGGTHAGDALTVNPFLGFQTLTPFVQAARENGGAIFVLVKTSNPDQQDLQGQGVSERIAVEIARLGDEEGLGDGDYASVGAVVGATHPGDLATFRALMPKALLLLPGLGAQGAQARDLAGAFHAGGTGALASASRAVQYARGLDVGAAREAALALRDELNGALGV.

Lys-92 functions as the Proton donor in the catalytic mechanism.

This sequence belongs to the OMP decarboxylase family. Type 2 subfamily.

It carries out the reaction orotidine 5'-phosphate + H(+) = UMP + CO2. It functions in the pathway pyrimidine metabolism; UMP biosynthesis via de novo pathway; UMP from orotate: step 2/2. The polypeptide is Orotidine 5'-phosphate decarboxylase (pyrF) (Deinococcus radiodurans (strain ATCC 13939 / DSM 20539 / JCM 16871 / CCUG 27074 / LMG 4051 / NBRC 15346 / NCIMB 9279 / VKM B-1422 / R1)).